The chain runs to 118 residues: Small ribosomal subunit protein uS13 (118 aa).

The interval G94–K118 is disordered.

This sequence belongs to the universal ribosomal protein uS13 family. In terms of assembly, part of the 30S ribosomal subunit. Forms a loose heterodimer with protein S19. Forms two bridges to the 50S subunit in the 70S ribosome.

Its function is as follows. Located at the top of the head of the 30S subunit, it contacts several helices of the 16S rRNA. In the 70S ribosome it contacts the 23S rRNA (bridge B1a) and protein L5 of the 50S subunit (bridge B1b), connecting the 2 subunits; these bridges are implicated in subunit movement. Contacts the tRNAs in the A and P-sites. This is Small ribosomal subunit protein uS13 from Mannheimia succiniciproducens (strain KCTC 0769BP / MBEL55E).